Consider the following 245-residue polypeptide: Orotidine 5'-phosphate decarboxylase (245 aa).

Substrate contacts are provided by residues aspartate 22, lysine 44, 71-80 (DLKFHDIPNT), threonine 131, arginine 192, glutamine 201, glycine 221, and arginine 222. The active-site Proton donor is the lysine 73.

Belongs to the OMP decarboxylase family. Type 1 subfamily. As to quaternary structure, homodimer.

It carries out the reaction orotidine 5'-phosphate + H(+) = UMP + CO2. The protein operates within pyrimidine metabolism; UMP biosynthesis via de novo pathway; UMP from orotate: step 2/2. Functionally, catalyzes the decarboxylation of orotidine 5'-monophosphate (OMP) to uridine 5'-monophosphate (UMP). This is Orotidine 5'-phosphate decarboxylase from Klebsiella pneumoniae (strain 342).